The sequence spans 461 residues: Asparagine--tRNA ligase (461 aa).

Belongs to the class-II aminoacyl-tRNA synthetase family. As to quaternary structure, homodimer.

Its subcellular location is the cytoplasm. The catalysed reaction is tRNA(Asn) + L-asparagine + ATP = L-asparaginyl-tRNA(Asn) + AMP + diphosphate + H(+). The protein is Asparagine--tRNA ligase of Geotalea uraniireducens (strain Rf4) (Geobacter uraniireducens).